The chain runs to 293 residues: Ribulose bisphosphate carboxylase/oxygenase activase, chloroplastic (293 aa).

Residue 75–82 participates in ATP binding; that stretch reads PGTGKTTV.

Belongs to the CbxX/CfxQ family. In terms of assembly, forms homooligomers. Forms heterohexameric rings with the nuclear-encoded Rca subunit consisting of 3 of each nuclear- and plastidial-encoded subunits that alternate in the ring.

The protein resides in the plastid. Its subcellular location is the chloroplast. In terms of biological role, required for the expression of ribulose 1,5-bisphosphate carboxylase/oxygenase (RuBisCo). ATPase involved in the activation of red-type RuBisCo, which tends to form inactive complexes with its substrate ribulose 1,5-bisphosphate (RuBP). Catalyzes the release of RuBP from inhibited RuBisCo in an ATP-dependent manner. Activation of RuBisCO involves the ATP-dependent carboxylation of the epsilon-amino group of lysine leading to a carbamate structure. The nuclear-encoded subunit plays a more critical role in activase function than the plastidial-encoded subunit. The polypeptide is Ribulose bisphosphate carboxylase/oxygenase activase, chloroplastic (Cyanidioschyzon merolae (strain NIES-3377 / 10D) (Unicellular red alga)).